A 543-amino-acid chain; its full sequence is EH domain-containing protein 2 (543 aa).

Ser3 carries the post-translational modification Phosphoserine. In terms of domain architecture, Dynamin-type G spans 55-286; that stretch reads FDGKPMVLVA…DLFRDIQGLP (232 aa). The tract at residues 65–72 is G1 motif; sequence GQYSTGKT. 65 to 72 is a binding site for ATP; it reads GQYSTGKT. A G2 motif region spans residues 91–92; the sequence is EP. Positions 120–122 match the KPF loop; caveolar targeting motif; it reads KPF. A G3 motif region spans residues 153–156; sequence DTPG. Residues 219–222 are G4 motif; the sequence is NKAD. Lys220 contacts ATP. Residue Val243 is a region of interest, G5 motif. Residue Trp258 participates in ATP binding. The mediates membrane-binding stretch occupies residues 320–340; it reads SVFGKENKKKQLILKLPVIFA. A phosphoserine mark is found at Ser438, Ser468, Ser470, Ser484, and Ser493. Residues 449 to 537 form the EH domain; sequence DKSKYDEIFY…RRLVPPSKRR (89 aa). In terms of domain architecture, EF-hand spans 481–516; that stretch reads LPNSVLGRIWKLSDVDRDGMLDDEEFALASHLIEAK. 5 residues coordinate Ca(2+): Asp494, Asp496, Asp498, Met500, and Glu505. The tract at residues 523–543 is disordered; it reads PANLPRRLVPPSKRRHKGSAE. A compositionally biased stretch (basic residues) spans 534-543; sequence SKRRHKGSAE.

It belongs to the TRAFAC class dynamin-like GTPase superfamily. Dynamin/Fzo/YdjA family. EHD subfamily. Homodimer and homooligomer. Interacts with EHD1. May also interact with EHD3 and EHD4. Interacts with MYOF. Interacts with EHBP1. Interacts with FER1L5 (via second C2 domain). Interacts with CAV1 in a cholesterol-dependent manner. Interacts (via EH domain) with PACSIN2 (via NPF motifs); this interaction probably stabilizes the caveolae. Highly expressed in heart and moderately expressed in placenta, lung, and skeletal muscle.

The protein localises to the cell membrane. Its subcellular location is the membrane. It localises to the caveola. The protein resides in the endosome membrane. It is found in the cytoplasm. The protein localises to the cytosol. With respect to regulation, the very low intrinsic ATPase activity is increased upon interaction with liposomes. ATP- and membrane-binding protein that controls membrane reorganization/tubulation upon ATP hydrolysis. Plays a role in membrane trafficking between the plasma membrane and endosomes. Important for the internalization of GLUT4. Required for fusion of myoblasts to skeletal muscle myotubes. Required for normal translocation of FER1L5 to the plasma membrane. Regulates the equilibrium between cell surface-associated and cell surface-dissociated caveolae by constraining caveolae at the cell membrane. The protein is EH domain-containing protein 2 of Homo sapiens (Human).